A 218-amino-acid polypeptide reads, in one-letter code: Cytidylate kinase (218 aa).

10 to 18 (GPAAAGKST) serves as a coordination point for ATP.

It belongs to the cytidylate kinase family. Type 1 subfamily.

Its subcellular location is the cytoplasm. The enzyme catalyses CMP + ATP = CDP + ADP. It catalyses the reaction dCMP + ATP = dCDP + ADP. The sequence is that of Cytidylate kinase from Staphylococcus haemolyticus (strain JCSC1435).